Reading from the N-terminus, the 351-residue chain is MKQQLNQLAAYQPGLSPQALKEKHGIEGELYKLASNENLYGPSPKAKQAVQAHLDELFYYPETGSPSLRKAISEHLNVDPSRILFGAGLDEVILMISRAVLTPGDKIVTSEGTFGQYYHNAIVESAEVVQVPLLNGGFDLENIIKEVDEETALVWLCNPNNPTGTYFNHDELESFLERVPSHVPVLIDEAYFEFVTAEDYPDTLKLQERFDNAFLLRTFSKAYGLAGLRVGYVVATNEAIEKWNIIRPPFNVTRISEYAAIAALEDQAYLKDVTAKNAKEREKFFEIPQSEHFLPSQTNFVFVVTEKAQELYEALLKVGCITRPFPTGVRITIGFPEQNDRMIEVLKHFDY.

The residue at position 221 (K221) is an N6-(pyridoxal phosphate)lysine.

Belongs to the class-II pyridoxal-phosphate-dependent aminotransferase family. Histidinol-phosphate aminotransferase subfamily. As to quaternary structure, homodimer. Requires pyridoxal 5'-phosphate as cofactor.

It carries out the reaction L-histidinol phosphate + 2-oxoglutarate = 3-(imidazol-4-yl)-2-oxopropyl phosphate + L-glutamate. Its pathway is amino-acid biosynthesis; L-histidine biosynthesis; L-histidine from 5-phospho-alpha-D-ribose 1-diphosphate: step 7/9. This chain is Histidinol-phosphate aminotransferase, found in Staphylococcus haemolyticus (strain JCSC1435).